Consider the following 88-residue polypeptide: RNA-binding protein Hfq (88 aa).

In terms of domain architecture, Sm spans D9–V68. A disordered region spans residues R66 to D88. A compositionally biased stretch (basic and acidic residues) spans H71 to D88.

This sequence belongs to the Hfq family. Homohexamer.

In terms of biological role, RNA chaperone that binds small regulatory RNA (sRNAs) and mRNAs to facilitate mRNA translational regulation in response to envelope stress, environmental stress and changes in metabolite concentrations. Also binds with high specificity to tRNAs. This is RNA-binding protein Hfq from Vibrio atlanticus (strain LGP32) (Vibrio splendidus (strain Mel32)).